We begin with the raw amino-acid sequence, 185 residues long: MIDDTLLEAEEKMEKATNVARENFAAIRTGRANPALFSKITVEYYGTPTPLNQLASFTVADARLIVIHPYDKGSLRAIEKAIRDSDLGVNPTDDGSVIRVAIPPLTEERRRDYIKMARHEAEEARVAIRNIRRHAKDALDKLQKDGEVGEDDVRRAEKELDELTHKYVAHIDEMLKHKEAELLEV.

Belongs to the RRF family.

The protein resides in the cytoplasm. Functionally, responsible for the release of ribosomes from messenger RNA at the termination of protein biosynthesis. May increase the efficiency of translation by recycling ribosomes from one round of translation to another. This is Ribosome-recycling factor from Acidothermus cellulolyticus (strain ATCC 43068 / DSM 8971 / 11B).